The following is a 79-amino-acid chain: Conotoxin ArMSGL-021 (79 aa).

The N-terminal stretch at 1–20 (MSRLGIMVLTLLLLVFIVTS) is a signal peptide. The propeptide occupies 21-44 (HQDAGEKQATHRGAINFRWRRSLI). Intrachain disulfides connect Cys-52-Cys-64, Cys-56-Cys-73, and Cys-63-Cys-77. A Leucine amide modification is found at Leu-78.

This sequence belongs to the conotoxin O3 superfamily. As to expression, expressed by the venom duct.

The protein resides in the secreted. This is Conotoxin ArMSGL-021 from Conus arenatus (Sand-dusted cone).